The sequence spans 347 residues: tRNA N6-adenosine threonylcarbamoyltransferase (347 aa).

Residues His-113 and His-117 each coordinate Fe cation. Substrate-binding positions include Ile-136 to Gly-140, Asp-170, Gly-183, Asp-187, and Asn-282. Asp-310 is a binding site for Fe cation.

This sequence belongs to the KAE1 / TsaD family. Requires Fe(2+) as cofactor.

The protein localises to the cytoplasm. The catalysed reaction is L-threonylcarbamoyladenylate + adenosine(37) in tRNA = N(6)-L-threonylcarbamoyladenosine(37) in tRNA + AMP + H(+). Its function is as follows. Required for the formation of a threonylcarbamoyl group on adenosine at position 37 (t(6)A37) in tRNAs that read codons beginning with adenine. Is involved in the transfer of the threonylcarbamoyl moiety of threonylcarbamoyl-AMP (TC-AMP) to the N6 group of A37, together with TsaE and TsaB. TsaD likely plays a direct catalytic role in this reaction. The sequence is that of tRNA N6-adenosine threonylcarbamoyltransferase from Bifidobacterium adolescentis (strain ATCC 15703 / DSM 20083 / NCTC 11814 / E194a).